The following is a 471-amino-acid chain: Retinoic acid receptor RXR-beta-A (471 aa).

Positions 1–34 (MGDSRDSRSPDSSSVSSPPSGQRSPPLAPSAAAM) are disordered. A modulating region spans residues 1–102 (MGDSRDSRSP…HAVSSSDDVK (102 aa)). A compositionally biased stretch (low complexity) spans 10-25 (PDSSSVSSPPSGQRSP). A DNA-binding region (nuclear receptor) is located at residues 122-197 (KRLCAICGDR…MGMKREVVQD (76 aa)). 2 NR C4-type zinc fingers span residues 125–145 (CAICGDRSSGKHYGVYSCEGC) and 161–185 (CRDNKDCLVDKRQRNRCQYCRYQKC). A compositionally biased stretch (basic and acidic residues) spans 196–216 (QDERQRSVQEERQRNKERDGE). The segment at 196–226 (QDERQRSVQEERQRNKERDGEVESSSAANEE) is disordered. The tract at residues 198 to 221 (ERQRSVQEERQRNKERDGEVESSS) is hinge. Residues 224-467 (NEEMPVEKIL…TFLMEMLEAP (244 aa)) enclose the NR LBD domain.

Belongs to the nuclear hormone receptor family. NR2 subfamily. Homodimer. Heterodimer; with a rar molecule. Binds DNA preferentially as a rar/rxr heterodimer. Heterodimerizes with rarga. In terms of tissue distribution, shows uniform expression from the blastula to mid-gastrula stages. At 12 hours post-fertilization (hpf), expressed ubiquitously but more weakly. At 24 hpf, restricted to the ventral diencephalon, pharangeal endoderm and trunk and tail mesoderm; mesoderm expression is in medial cells of each somite along the dorsoventral axis, forming stripes. At 48 hpf, expressed in forebrain, eye, midbrain and anterior hindbrain.

The protein resides in the nucleus. Functionally, receptor for retinoic acid. Retinoic acid receptors bind as heterodimers to their target response elements in response to their ligands, all-trans or 9-cis retinoic acid, and regulate gene expression in various biological processes. The rar/rxr heterodimers bind to the retinoic acid response elements (RARE) composed of tandem 5'-AGGTCA-3' sites known as DR1-DR5. The high affinity ligand for rxrs is 9-cis retinoic acid. This chain is Retinoic acid receptor RXR-beta-A (rxrba), found in Danio rerio (Zebrafish).